A 223-amino-acid polypeptide reads, in one-letter code: Large ribosomal subunit protein uL3 (223 aa).

It belongs to the universal ribosomal protein uL3 family. As to quaternary structure, part of the 50S ribosomal subunit. Forms a cluster with proteins L14 and L19.

One of the primary rRNA binding proteins, it binds directly near the 3'-end of the 23S rRNA, where it nucleates assembly of the 50S subunit. The protein is Large ribosomal subunit protein uL3 of Mycoplasma capricolum subsp. capricolum (strain California kid / ATCC 27343 / NCTC 10154).